Consider the following 519-residue polypeptide: Mannosyl-oligosaccharide alpha-1,2-mannosidase (519 aa).

The signal sequence occupies residues 1–22 (MKGSPVLAVCAAALTLIPSVVA). N187 is a glycosylation site (N-linked (GlcNAc...) asparagine). Cysteines 337 and 366 form a disulfide. E380 acts as the Proton donor in catalysis. Residue N443 is glycosylated (N-linked (GlcNAc...) asparagine). T507 contacts Ca(2+).

This sequence belongs to the glycosyl hydrolase 47 family. As to quaternary structure, monomer. Requires Ca(2+) as cofactor. The cofactor is Mg(2+).

Its subcellular location is the secreted. It catalyses the reaction N(4)-(alpha-D-Man-(1-&gt;2)-alpha-D-Man-(1-&gt;2)-alpha-D-Man-(1-&gt;3)-[alpha-D-Man-(1-&gt;2)-alpha-D-Man-(1-&gt;3)-[alpha-D-Man-(1-&gt;2)-alpha-D-Man-(1-&gt;6)]-alpha-D-Man-(1-&gt;6)]-beta-D-Man-(1-&gt;4)-beta-D-GlcNAc-(1-&gt;4)-beta-D-GlcNAc)-L-asparaginyl-[protein] (N-glucan mannose isomer 9A1,2,3B1,2,3) + 4 H2O = N(4)-(alpha-D-Man-(1-&gt;3)-[alpha-D-Man-(1-&gt;3)-[alpha-D-Man-(1-&gt;6)]-alpha-D-Man-(1-&gt;6)]-beta-D-Man-(1-&gt;4)-beta-D-GlcNAc-(1-&gt;4)-beta-D-GlcNAc)-L-asparaginyl-[protein] (N-glucan mannose isomer 5A1,2) + 4 beta-D-mannose. The catalysed reaction is N(4)-(alpha-D-Man-(1-&gt;2)-alpha-D-Man-(1-&gt;2)-alpha-D-Man-(1-&gt;3)-[alpha-D-Man-(1-&gt;3)-[alpha-D-Man-(1-&gt;2)-alpha-D-Man-(1-&gt;6)]-alpha-D-Man-(1-&gt;6)]-beta-D-Man-(1-&gt;4)-beta-D-GlcNAc-(1-&gt;4)-beta-D-GlcNAc)-L-asparaginyl-[protein] (N-glucan mannose isomer 8A1,2,3B1,3) + 3 H2O = N(4)-(alpha-D-Man-(1-&gt;3)-[alpha-D-Man-(1-&gt;3)-[alpha-D-Man-(1-&gt;6)]-alpha-D-Man-(1-&gt;6)]-beta-D-Man-(1-&gt;4)-beta-D-GlcNAc-(1-&gt;4)-beta-D-GlcNAc)-L-asparaginyl-[protein] (N-glucan mannose isomer 5A1,2) + 3 beta-D-mannose. It participates in protein modification; protein glycosylation. In terms of biological role, alpha-mannosidase involved in the maturation of Asn-linked oligosaccharides. Progressively trims alpha-1,2-linked mannose residues from Man(9)GlcNAc(2) to produce Man(5)GlcNAc(2). The polypeptide is Mannosyl-oligosaccharide alpha-1,2-mannosidase (Coccidioides posadasii (strain RMSCC 757 / Silveira) (Valley fever fungus)).